The following is a 307-amino-acid chain: Protoheme IX farnesyltransferase (307 aa).

Helical transmembrane passes span 29–49, 51–71, 101–120, 124–143, 151–171, 179–199, 218–238, 239–259, and 280–300; these read VISLLLWTTLTAMFMAARGWP, LGLLVVVSLAGYMSAGSAGVF, AAIFGGALQVLSFGMLWVWA, AAWMSLAGFLTYVVVYTLWL, IVLGGAAGCFPPLVGWAAVTG, FLFAIIFFWTPVHFWALALMI, RLTVAQIGLYAIYTVVLSVMP, VFLGEVGWLYFLSALVLGWLL, and VAVPLYLYSMLYLALLFVAGA.

Belongs to the UbiA prenyltransferase family. Protoheme IX farnesyltransferase subfamily.

The protein resides in the cell membrane. It carries out the reaction heme b + (2E,6E)-farnesyl diphosphate + H2O = Fe(II)-heme o + diphosphate. Its pathway is porphyrin-containing compound metabolism; heme O biosynthesis; heme O from protoheme: step 1/1. Converts heme B (protoheme IX) to heme O by substitution of the vinyl group on carbon 2 of heme B porphyrin ring with a hydroxyethyl farnesyl side group. The sequence is that of Protoheme IX farnesyltransferase from Deinococcus geothermalis (strain DSM 11300 / CIP 105573 / AG-3a).